The primary structure comprises 60 residues: UPF0434 protein YcaR (60 aa).

Belongs to the UPF0434 family.

The polypeptide is UPF0434 protein YcaR (Salmonella arizonae (strain ATCC BAA-731 / CDC346-86 / RSK2980)).